We begin with the raw amino-acid sequence, 181 residues long: Probable pyruvoyl-dependent arginine decarboxylase (181 aa).

Ser-43 is modified (pyruvic acid (Ser)).

It belongs to the PdaD family. It depends on pyruvate as a cofactor.

The catalysed reaction is L-arginine + H(+) = agmatine + CO2. In Chlorobaculum tepidum (strain ATCC 49652 / DSM 12025 / NBRC 103806 / TLS) (Chlorobium tepidum), this protein is Probable pyruvoyl-dependent arginine decarboxylase.